A 306-amino-acid chain; its full sequence is UDP-3-O-acyl-N-acetylglucosamine deacetylase (306 aa).

The Zn(2+) site is built by His-79, His-238, and Asp-242. His-265 serves as the catalytic Proton donor.

This sequence belongs to the LpxC family. Zn(2+) is required as a cofactor.

The catalysed reaction is a UDP-3-O-[(3R)-3-hydroxyacyl]-N-acetyl-alpha-D-glucosamine + H2O = a UDP-3-O-[(3R)-3-hydroxyacyl]-alpha-D-glucosamine + acetate. Its pathway is glycolipid biosynthesis; lipid IV(A) biosynthesis; lipid IV(A) from (3R)-3-hydroxytetradecanoyl-[acyl-carrier-protein] and UDP-N-acetyl-alpha-D-glucosamine: step 2/6. Catalyzes the hydrolysis of UDP-3-O-myristoyl-N-acetylglucosamine to form UDP-3-O-myristoylglucosamine and acetate, the committed step in lipid A biosynthesis. The protein is UDP-3-O-acyl-N-acetylglucosamine deacetylase of Shewanella frigidimarina (strain NCIMB 400).